We begin with the raw amino-acid sequence, 260 residues long: MERLENCAQMFQRKFLNEAFRRHCPVLLACIALGGSLLKELSPLPDSYWNNKRNVLNVYFVKFCWGWTLWLLLPFITLTNYKLTGSITKVLRRLSSLLVGTLFWYLCTNLFLYIEHITGSCYESEALLDSIEHQDRKECRLHGGFWHGFDISGHCFLLSYCILIILEETSVIRSIQFERHWHRMAINAQFTALSILVIIWVWMFLCTAVYFHNIFQKVIGTAFGMLAWYITYRWWYLQPISPGLPPASASHSEKEPVYKN.

The Cytoplasmic portion of the chain corresponds to 1 to 23 (MERLENCAQMFQRKFLNEAFRRH). The chain crosses the membrane as a helical span at residues 24–44 (CPVLLACIALGGSLLKELSPL). Over 45-57 (PDSYWNNKRNVLN) the chain is Lumenal. The chain crosses the membrane as a helical span at residues 58–78 (VYFVKFCWGWTLWLLLPFITL). Residues 79-93 (TNYKLTGSITKVLRR) are Cytoplasmic-facing. A helical transmembrane segment spans residues 94–114 (LSSLLVGTLFWYLCTNLFLYI). Residues 115-144 (EHITGSCYESEALLDSIEHQDRKECRLHGG) are Lumenal-facing. Residues 145 to 165 (FWHGFDISGHCFLLSYCILII) traverse the membrane as a helical segment. His-154 is an active-site residue. Over 166–189 (LEETSVIRSIQFERHWHRMAINAQ) the chain is Cytoplasmic. Helical transmembrane passes span 190 to 210 (FTAL…TAVY) and 211 to 231 (FHNI…WYIT). His-212 is a catalytic residue. The Cytoplasmic portion of the chain corresponds to 232–260 (YRWWYLQPISPGLPPASASHSEKEPVYKN).

This sequence belongs to the FIT family. FIT2 subfamily.

The protein resides in the endoplasmic reticulum membrane. The catalysed reaction is an acyl-CoA + H2O = an acyl-4'-phosphopantetheine + adenosine 3',5'-bisphosphate + 2 H(+). Fatty acyl-coenzyme A (CoA) diphosphatase that hydrolyzes fatty acyl-CoA to yield acyl-4'-phosphopantetheine and adenosine 3',5'-bisphosphate. Preferentially hydrolyzes unsaturated long-chain acyl-CoA substrates in the endoplasmic reticulum (ER) lumen. This catalytic activity is required for maintaining ER structure and for lipid droplets (LDs) biogenesis, which are lipid storage organelles involved in maintaining lipid and energy homeostasis. May directly bind to diacylglycerol (DAGs) and triacylglycerol, which is also important for LD biogenesis. May support directional budding of nacent LDs from the ER into the cytosol by reducing DAG levels at sites of LD formation. May play a role in the regulation of cell morphology, ER morphology and cytoskeletal organization. This is Acyl-coenzyme A diphosphatase FITM2 from Xenopus laevis (African clawed frog).